Reading from the N-terminus, the 168-residue chain is Small ribosomal subunit protein bS6 (168 aa).

The tract at residues 97–168 (EEGPSAMMRK…APAPAAATEE (72 aa)) is disordered. Residues 105–158 (RKADRDRDRDDRGGFRGDREGGFRGDREGGFRGGDREGGGFRGDRGPRRPRDDA) show a composition bias toward basic and acidic residues.

This sequence belongs to the bacterial ribosomal protein bS6 family.

Functionally, binds together with bS18 to 16S ribosomal RNA. The chain is Small ribosomal subunit protein bS6 from Rhodopseudomonas palustris (strain BisB18).